Consider the following 306-residue polypeptide: UDP-3-O-acyl-N-acetylglucosamine deacetylase (306 aa).

Zn(2+) is bound by residues His79, His238, and Asp242. Residue His265 is the Proton donor of the active site.

The protein belongs to the LpxC family. Zn(2+) serves as cofactor.

It catalyses the reaction a UDP-3-O-[(3R)-3-hydroxyacyl]-N-acetyl-alpha-D-glucosamine + H2O = a UDP-3-O-[(3R)-3-hydroxyacyl]-alpha-D-glucosamine + acetate. It functions in the pathway glycolipid biosynthesis; lipid IV(A) biosynthesis; lipid IV(A) from (3R)-3-hydroxytetradecanoyl-[acyl-carrier-protein] and UDP-N-acetyl-alpha-D-glucosamine: step 2/6. Functionally, catalyzes the hydrolysis of UDP-3-O-myristoyl-N-acetylglucosamine to form UDP-3-O-myristoylglucosamine and acetate, the committed step in lipid A biosynthesis. This Shewanella halifaxensis (strain HAW-EB4) protein is UDP-3-O-acyl-N-acetylglucosamine deacetylase.